The primary structure comprises 397 residues: Lysophospholipid transporter LplT (397 aa).

Topologically, residues 1 to 17 (MSESVHTNTSLWSKGMK) are periplasmic. Residues 18-38 (AVIVAQFLSAFGDNALLFATL) form a helical membrane-spanning segment. Over 39–52 (ALLKAQFYPEWSQP) the chain is Cytoplasmic. A helical transmembrane segment spans residues 53–73 (ILQMVFVGAYILFAPFVGQVA). The Periplasmic segment spans residues 74 to 90 (DSFAKGRVMMFANGLKL). A helical transmembrane segment spans residues 91-111 (LGAASICFGINPFLGYTLVGV). Residues 112–144 (GAAAYSPAKYGILGELTTGSKLVKANGLMEAST) lie on the Cytoplasmic side of the membrane. The helical transmembrane segment at 145–165 (IAAILLGSVAGGVLADWHVLV) threads the bilayer. Position 166 (A166) is a topological domain, periplasmic. A helical membrane pass occupies residues 167 to 187 (LAACALAYGGAVVANIYIPKL). Topologically, residues 188-226 (AAARPGQSWNLINMTRSFLNACTSLWCNGETRFSLVGTS) are cytoplasmic. The helical transmembrane segment at 227 to 247 (LFWGAGVTLRFLLVLWVPVAL) threads the bilayer. Over 248 to 256 (GITDNATPT) the chain is Periplasmic. Residues 257-277 (YLNAMVAIGIVVGAGAAAKLV) form a helical membrane-spanning segment. Topologically, residues 278 to 280 (TLE) are cytoplasmic. A helical transmembrane segment spans residues 281–301 (TVSRCMPAGILIGVVVLIFSL). Over 302 to 304 (QHE) the chain is Periplasmic. A helical membrane pass occupies residues 305 to 325 (LLPAYALLMLIGVLGGFFVVP). Residues 326–343 (LNALLQERGKKSVGAGNA) are Cytoplasmic-facing. The helical transmembrane segment at 344-364 (IAVQNLGENSAMLLMLGIYSL) threads the bilayer. Over 365–366 (AV) the chain is Periplasmic. The chain crosses the membrane as a helical span at residues 367-387 (MVGIPVVPIGIGFGALFALAI). The Cytoplasmic segment spans residues 388–397 (TALWIWQRRH).

It belongs to the major facilitator superfamily. LplT (TC 2.A.1.42) family.

The protein resides in the cell inner membrane. Catalyzes the facilitated diffusion of 2-acyl-glycero-3-phosphoethanolamine (2-acyl-GPE) into the cell. The protein is Lysophospholipid transporter LplT of Shigella dysenteriae serotype 1 (strain Sd197).